Here is a 396-residue protein sequence, read N- to C-terminus: Elongation factor Tu (396 aa).

The region spanning 10–206 (KPHVNVGTIG…ALDTYIPEPE (197 aa)) is the tr-type G domain. A G1 region spans residues 19–26 (GHVDHGKT). 19 to 26 (GHVDHGKT) contributes to the GTP binding site. Residue Thr-26 coordinates Mg(2+). The tract at residues 60–64 (GITIN) is G2. The tract at residues 81 to 84 (DCPG) is G3. GTP-binding positions include 81–85 (DCPGH) and 136–139 (NKCD). Residues 136 to 139 (NKCD) form a G4 region. Residues 174-176 (SAL) form a G5 region.

Belongs to the TRAFAC class translation factor GTPase superfamily. Classic translation factor GTPase family. EF-Tu/EF-1A subfamily. In terms of assembly, monomer.

The protein resides in the cytoplasm. It carries out the reaction GTP + H2O = GDP + phosphate + H(+). Functionally, GTP hydrolase that promotes the GTP-dependent binding of aminoacyl-tRNA to the A-site of ribosomes during protein biosynthesis. This chain is Elongation factor Tu, found in Acinetobacter baylyi (strain ATCC 33305 / BD413 / ADP1).